The chain runs to 353 residues: CCN family member 3 (353 aa).

Residues 1 to 26 form the signal peptide; sequence MEPGGGHSLPVLLLLLLLLLLRPSEV. The region spanning 29–103 is the IGFBP N-terminal domain; it reads REAPCPRPCG…GGGTGICMVL (75 aa). 6 cysteine pairs are disulfide-bonded: C33–C59, C37–C61, C41–C62, C48–C65, C73–C87, and C79–C100. The region spanning 106-172 is the VWFC domain; that stretch reads DNCVFDGMIY…GECCEKWVCE (67 aa). One can recognise a TSP type-1 domain in the interval 203–248; the sequence is NCIEQTTEWSACSRSCGMGFSTRVTNRNQQCEMVKQTRLCMMRPCE. 5 disulfide bridges follow: C260-C297, C277-C311, C288-C327, C291-C329, and C296-C333. Residues 260–334 enclose the CTCK domain; that stretch reads CIRTKKSMKA…NTCVCHGNCP (75 aa). N276 is a glycosylation site (N-linked (GlcNAc...) asparagine).

This sequence belongs to the CCN family.

It is found in the secreted. The protein localises to the cytoplasm. It localises to the cell junction. The protein resides in the gap junction. Functionally, immediate-early protein likely to play a role in cell growth regulation. The protein is CCN family member 3 (CCN3) of Coturnix japonica (Japanese quail).